The chain runs to 182 residues: Bifunctional protein PyrR (182 aa).

The PRPP-binding motif lies at 99–111 (VILVDDVLYTGRT).

The protein belongs to the purine/pyrimidine phosphoribosyltransferase family. PyrR subfamily. In terms of assembly, homodimer and homohexamer; in equilibrium.

It catalyses the reaction UMP + diphosphate = 5-phospho-alpha-D-ribose 1-diphosphate + uracil. Functionally, regulates transcriptional attenuation of the pyrimidine nucleotide (pyr) operon by binding in a uridine-dependent manner to specific sites on pyr mRNA. This disrupts an antiterminator hairpin in the RNA and favors formation of a downstream transcription terminator, leading to a reduced expression of downstream genes. Its function is as follows. Also displays a weak uracil phosphoribosyltransferase activity which is not physiologically significant. This Alkaliphilus metalliredigens (strain QYMF) protein is Bifunctional protein PyrR.